Reading from the N-terminus, the 481-residue chain is Mediator of RNA polymerase II transcription subunit 3 (481 aa).

The stretch at Gln-79–Gln-107 forms a coiled coil. 2 disordered regions span residues Ala-140–Pro-261 and Asn-415–Tyr-463. Over residues Thr-148–Ala-203 the composition is skewed to low complexity. The span at Lys-204–Lys-213 shows a compositional bias: basic residues. Low complexity predominate over residues Lys-214–Asn-248. Positions Ile-249–Gly-259 are enriched in polar residues. The span at Met-428–Asn-458 shows a compositional bias: low complexity.

Belongs to the Mediator complex subunit 3 family. Component of the Mediator complex.

The protein resides in the nucleus. Its function is as follows. Component of the Mediator complex, a coactivator involved in regulated gene transcription of nearly all RNA polymerase II-dependent genes. Mediator functions as a bridge to convey information from gene-specific regulatory proteins to the basal RNA polymerase II transcription machinery. Mediator is recruited to promoters by direct interactions with regulatory proteins and serves as a scaffold for the assembly of a functional preinitiation complex with RNA polymerase II and the general transcription factors. The protein is Mediator of RNA polymerase II transcription subunit 3 (PGD1) of Candida glabrata (strain ATCC 2001 / BCRC 20586 / JCM 3761 / NBRC 0622 / NRRL Y-65 / CBS 138) (Yeast).